Here is an 83-residue protein sequence, read N- to C-terminus: Cytochrome b559 subunit alpha (83 aa).

Residues 21–35 (VIHSITIPSLFIAGW) traverse the membrane as a helical segment. H23 contacts heme.

It belongs to the PsbE/PsbF family. Heterodimer of an alpha subunit and a beta subunit. PSII is composed of 1 copy each of membrane proteins PsbA, PsbB, PsbC, PsbD, PsbE, PsbF, PsbH, PsbI, PsbJ, PsbK, PsbL, PsbM, PsbT, PsbX, PsbY, PsbZ, Psb30/Ycf12, at least 3 peripheral proteins of the oxygen-evolving complex and a large number of cofactors. It forms dimeric complexes. Requires heme b as cofactor.

The protein localises to the plastid. It localises to the chloroplast thylakoid membrane. In terms of biological role, this b-type cytochrome is tightly associated with the reaction center of photosystem II (PSII). PSII is a light-driven water:plastoquinone oxidoreductase that uses light energy to abstract electrons from H(2)O, generating O(2) and a proton gradient subsequently used for ATP formation. It consists of a core antenna complex that captures photons, and an electron transfer chain that converts photonic excitation into a charge separation. The sequence is that of Cytochrome b559 subunit alpha from Acorus calamus (Sweet flag).